The chain runs to 430 residues: Evolutionarily conserved signaling intermediate in Toll pathway, mitochondrial (430 aa).

The transit peptide at 1–48 (MSWVQATLLARGLCRAWGGICRAALPGTSISQVPRQLPRGLHCSAAPH) directs the protein to the mitochondrion. Residues 41–66 (LHCSAAPHSSEQSLVSSPPEPRQRPT) form a disordered region. Residues 47 to 56 (PHSSEQSLVS) show a composition bias toward polar residues. Residue K372 forms a Glycyl lysine isopeptide (Lys-Gly) (interchain with G-Cter in ubiquitin) linkage. Positions 400 to 430 (LHTSSAGLEEPPPPEDHEEDDSRQRQQQGQS) are disordered. A compositionally biased stretch (acidic residues) spans 411–420 (PPPEDHEEDD).

It belongs to the ECSIT family. As to quaternary structure, interacts with MAP3K1, SMAD4 and TRAF6. Interacts with SMAD1 only after BMP4-treatment. Part of the mitochondrial complex I assembly/MCIA complex that comprises at least the core subunits TMEM126B, NDUFAF1, ECSIT and ACAD9 and complement subunits such as COA1 and TMEM186. Interacts with NDUFAF1. Interacts with ACAD9. Interacts with TRIM59. Interacts with TMEM70 and TMEM242. Interacts (when ubiquitinated) with NF-kappa-B subunits RELA and NFKB1. Interacts with RIGI, IFIT1 and MAVS; these interactions promote RLR-mediated type I IFN induction. Interacts with SQSTM1; this interaction inhibits TLR4 signaling via functional regulation of the TRAF6-ECSIT complex. Interacts with cereblon/CRBN; this interaction inhibits the ubiquitination of ECSIT. In terms of processing, ubiquitinated on Lys-372; leading to translocation in the nucleus together with RELA and NFKB1 and expression of NF-kappa-B-dependent genes.

It localises to the cytoplasm. Its subcellular location is the nucleus. It is found in the mitochondrion. Functionally, adapter protein that plays a role in different signaling pathways including TLRs and IL-1 pathways or innate antiviral induction signaling. Plays a role in the activation of NF-kappa-B by forming a signal complex with TRAF6 and TAK1/MAP3K7 to activate TAK1/MAP3K7 leading to activation of IKKs. Once ubiquitinated, interacts with the dissociated RELA and NFKB1 proteins and translocates to the nucleus where it induces NF-kappa-B-dependent gene expression. Plays a role in innate antiviral immune response by bridging the pattern recognition receptors RIGI and MDA5/IFIT1 to the MAVS complex at the mitochondrion. Promotes proteolytic activation of MAP3K1. Involved in the BMP signaling pathway. Required for normal embryonic development. In terms of biological role, as part of the MCIA complex, involved in the assembly of the mitochondrial complex I. The sequence is that of Evolutionarily conserved signaling intermediate in Toll pathway, mitochondrial from Macaca fascicularis (Crab-eating macaque).